The primary structure comprises 156 residues: Small ribosomal subunit protein uS7 (156 aa).

The protein belongs to the universal ribosomal protein uS7 family. As to quaternary structure, part of the 30S ribosomal subunit. Contacts proteins S9 and S11.

Functionally, one of the primary rRNA binding proteins, it binds directly to 16S rRNA where it nucleates assembly of the head domain of the 30S subunit. Is located at the subunit interface close to the decoding center, probably blocks exit of the E-site tRNA. This Marinobacter nauticus (strain ATCC 700491 / DSM 11845 / VT8) (Marinobacter aquaeolei) protein is Small ribosomal subunit protein uS7.